The sequence spans 440 residues: WAS/WASL-interacting protein family member 2 (440 aa).

The segment covering 1–18 has biased composition (pro residues); it reads MPIPPPPPPPPGPPPPPT. Positions 1–38 are disordered; the sequence is MPIPPPPPPPPGPPPPPTFNQANTEQPKLSRDEQRNRG. A WH2 domain is found at 36 to 53; the sequence is NRGALLQDICKGTKLKKV. Arg-37 carries the post-translational modification Asymmetric dimethylarginine. The binds actin stretch occupies residues 49–52; sequence KLKK. 2 disordered regions span residues 56–386 and 419–440; these read VNDR…RDSI and RVYPSKTNRAARGAPPLPPILR. Low complexity predominate over residues 116-132; sequence PSSRAAAPRPPGSAASG. Pro residues-rich tracts occupy residues 176–193, 225–236, 249–262, and 356–378; these read APPPPPPGRRANAPPTPL, PAPPPVKPPPSP, APPPPPYRQPPGVP, and RGKPPPPPSRTPAGPPPPPPPPL.

This sequence belongs to the verprolin family. As to quaternary structure, interacts with WASL and WASP, and this interaction results in cytoplasmic relocation of these two proteins along actin filaments. Interacts with NCK2 resulting in the localization to sites of focal adhesions.

Its subcellular location is the cytoplasm. It is found in the cytoskeleton. In terms of biological role, plays an active role in the formation of cell surface protrusions downstream of activated PDGFB receptors. Plays an important role in actin-microspike formation through cooperation with WASL. May cooperate with WASP and WASL to induce mobilization and reorganization of the actin filament system. This chain is WAS/WASL-interacting protein family member 2 (Wipf2), found in Mus musculus (Mouse).